Reading from the N-terminus, the 587-residue chain is Serine/threonine-protein phosphatase 2A 65 kDa regulatory subunit A beta isoform (587 aa).

An N-acetylserine modification is found at Ser2. 14 HEAT repeats span residues 2–42 (SMID…ALGE), 44–80 (RTRKELIPFLSENNDDDDEVLLAMAEELGVFIPYVGG), 81–119 (VEYAHVLLPPLETLSTVEETCVREKAVESLCRVGSQMRE), 158–196 (DMLKTELRSLYTQLCQDDMPMVRRAAATNLGKFAATVES), 197–235 (AHLKTDVMSMFEDLTQDDQDSVRLLAVEGCAALGKLLEP), 236–274 (QDCVQHILPVIVNFSQDKSWRVRYMVANQLYELCEAVGP), 275–313 (EPTRTELVPAYVRLLRDNEAEVRIAAAGKVTKFCRILNP), 315–352 (IAIQHILPCVKELSSDSSQHVRSALASVIMGMAPVLGK), 353–391 (DATIEHLLPIFLSLLKDEFPDVRLNIISKLDQVNQVIGI), 393–430 (LLSQSLLPAIVELAEDRHWRVRLAIIEYIPLLASQLGV), 432–469 (FFDDKLGALCMQWLQDKVHSIRDAAANNLKRLAEEFGP), 470–508 (EWAMQHIVPQVLEMVNNPHYLYRMTILRAVSLLAPVMGS), 509–547 (EITCSKLLPVVMTASKDRVPNIKFNVAKVLQSLIPIVDQ), and 549–586 (VVEKTIRPGLVELSEDPDVDVRFFANQALQSIDNVMMS).

This sequence belongs to the phosphatase 2A regulatory subunit A family. PP2A consists of a common heterodimeric core enzyme, composed of a 36 kDa catalytic subunit (subunit C) and a 65 kDa constant regulatory subunit (subunit A), that associates with a variety of regulatory subunits such as subunits B (the R2/B/PR55/B55, R3/B''/PR72/PR130/PR59 and R5/B'/B56 families). Interacts with B'THETA. Interacts with SRK2E/OST1. Interacts with SIC/RON3. As to expression, ubiquitous, with higher levels in roots and flowers (at protein level).

It is found in the cytoplasm. The protein resides in the cytosol. The protein localises to the nucleus. It localises to the peroxisome. In terms of biological role, the A subunit of protein phosphatase 2A serves as a scaffolding molecule to coordinate the assembly of the catalytic subunit and a variable regulatory B subunit. Involved during developmental process such as seedling and floral developments. Seems to act as a negative regulator of PP2A catalytic activity. Associates with the serine/threonine-protein phosphatase PP2A catalytic subunit C and regulatory subunit B' to positively regulates beta-oxidation of fatty acids and protoauxins in peroxisomes by dephosphorylating peroxisomal beta-oxidation-related proteins. The chain is Serine/threonine-protein phosphatase 2A 65 kDa regulatory subunit A beta isoform (PP2AA2) from Arabidopsis thaliana (Mouse-ear cress).